Reading from the N-terminus, the 240-residue chain is Small ribosomal subunit protein eS4 (240 aa).

The region spanning 37–99 (VPLVVLLRDV…RGEFFRVFPD (63 aa)) is the S4 RNA-binding domain.

This sequence belongs to the eukaryotic ribosomal protein eS4 family.

This is Small ribosomal subunit protein eS4 from Halorubrum lacusprofundi (strain ATCC 49239 / DSM 5036 / JCM 8891 / ACAM 34).